Reading from the N-terminus, the 505-residue chain is Protein disulfide-isomerase A3 (505 aa).

Positions 1 to 24 (MRLRRLALFPGVALLLAAARLAAA) are cleaved as a signal peptide. One can recognise a Thioredoxin 1 domain in the interval 25–133 (SDVLELTDDN…IVSHLKKQAG (109 aa)). Catalysis depends on nucleophile residues cysteine 57 and cysteine 60. Cysteine 57 and cysteine 60 are disulfide-bonded. Residue lysine 61 is modified to N6-methyllysine. A disulfide bridge links cysteine 85 with cysteine 92. N6-succinyllysine is present on lysine 129. At lysine 152 the chain carries N6-acetyllysine. An N6-succinyllysine modification is found at lysine 218. Lysine 252 is modified (N6-acetyllysine). A Phosphothreonine modification is found at threonine 319. Positions 343–485 (SRDGKALERF…FISYLQREAT (143 aa)) constitute a Thioredoxin 2 domain. Lysine 362 carries the post-translational modification N6-acetyllysine. Catalysis depends on nucleophile residues cysteine 406 and cysteine 409. Cysteines 406 and 409 form a disulfide. The tract at residues 484 to 505 (ATNPPVIQEEKPKKKKKAQEDL) is disordered. Residues 491–505 (QEEKPKKKKKAQEDL) show a composition bias toward basic and acidic residues. Lysine 494 bears the N6-acetyllysine mark. The Prevents secretion from ER motif lies at 502 to 505 (QEDL).

Belongs to the protein disulfide isomerase family. In terms of assembly, part of the major histocompatibility complex class I (MHC I) peptide loading complex composed of TAP1, TAP2, B2M, MHC heavy chain, TAPBP, PDIA3, and CALR. Interacts with ERP27 and CANX. Interacts with SERPINA2 and with SERPINA1. Interacts with ATP2A2. Post-translationally, within the major histocompatibility complex class I (MHC I) peptide loading complex forms reversible disulfide-linked heterodimers with TAPBP as part of its protein folding chaperone activity. This is essential to assist the dynamic assembly of the MHC I complex with high affinity antigens in the endoplasmic reticulum. Phosphorylated.

Its subcellular location is the endoplasmic reticulum. It is found in the endoplasmic reticulum lumen. The protein resides in the melanosome. It carries out the reaction Catalyzes the rearrangement of -S-S- bonds in proteins.. Protein disulfide isomerase that catalyzes the formation, isomerization, and reduction or oxidation of disulfide bonds in client proteins and functions as a protein folding chaperone. Core component of the major histocompatibility complex class I (MHC I) peptide loading complex where it functions as an essential folding chaperone for TAPBP. Through TAPBP, assists the dynamic assembly of the MHC I complex with high affinity antigens in the endoplasmic reticulum. Therefore, plays a crucial role in the presentation of antigens to cytotoxic T cells in adaptive immunity. The polypeptide is Protein disulfide-isomerase A3 (PDIA3) (Chlorocebus aethiops (Green monkey)).